We begin with the raw amino-acid sequence, 444 residues long: Tubulin beta chain (444 aa).

The short motif at 1–4 (MREI) is the MREI motif element. Gln-11 is a GTP binding site. Position 40 is a phosphoserine (Ser-40). Phosphothreonine is present on Thr-55. N6-acetyllysine; alternate is present on Lys-58. N6-succinyllysine; alternate is present on Lys-58. Lys-58 participates in a covalent cross-link: Glycyl lysine isopeptide (Lys-Gly) (interchain with G-Cter in ubiquitin); alternate. Glu-69, Ser-138, Gly-142, Thr-143, and Gly-144 together coordinate GTP. Mg(2+) is bound at residue Glu-69. Ser-172 carries the post-translational modification Phosphoserine; by CDK1. GTP contacts are provided by Asn-204 and Asn-226. Phosphothreonine occurs at positions 285 and 290. Omega-N-methylarginine is present on Arg-318. Lys-324 participates in a covalent cross-link: Glycyl lysine isopeptide (Lys-Gly) (interchain with G-Cter in ubiquitin). Residues 423 to 444 (QQYQDATAEEEEDFGEEAEEEA) form a disordered region. Acidic residues predominate over residues 429 to 444 (TAEEEEDFGEEAEEEA). Residues Glu-434, Glu-438, Glu-439, and Glu-441 each carry the 5-glutamyl polyglutamate modification. 5 positions are modified to 5-glutamyl glycine: Glu-438, Glu-439, Glu-441, Glu-442, and Glu-443.

This sequence belongs to the tubulin family. Heterodimer of alpha and beta chains. A typical microtubule is a hollow water-filled tube with an outer diameter of 25 nm and an inner diameter of 15 nM. Alpha-beta heterodimers associate head-to-tail to form protofilaments running lengthwise along the microtubule wall with the beta-tubulin subunit facing the microtubule plus end conferring a structural polarity. Microtubules usually have 13 protofilaments but different protofilament numbers can be found in some organisms and specialized cells. Interacts with CIMAP3. Interacts with DIAPH1. Interacts with MX1. May interact with RNABP10. Interacts with CFAP157. Nascent tubulin polypeptide interacts (via beta-tubulin MREI motif) with TTC5/STRAP; this interaction results in tubulin mRNA-targeted degradation. Mg(2+) serves as cofactor. Post-translationally, some glutamate residues at the C-terminus are polyglycylated, resulting in polyglycine chains on the gamma-carboxyl group. Glycylation is mainly limited to tubulin incorporated into axonemes (cilia and flagella) whereas glutamylation is prevalent in neuronal cells, centrioles, axonemes, and the mitotic spindle. Both modifications can coexist on the same protein on adjacent residues, and lowering polyglycylation levels increases polyglutamylation, and reciprocally. Cilia and flagella glycylation is required for their stability and maintenance. Flagella glycylation controls sperm motility. In terms of processing, some glutamate residues at the C-terminus are polyglutamylated, resulting in polyglutamate chains on the gamma-carboxyl group. Polyglutamylation plays a key role in microtubule severing by spastin (SPAST). SPAST preferentially recognizes and acts on microtubules decorated with short polyglutamate tails: severing activity by SPAST increases as the number of glutamates per tubulin rises from one to eight, but decreases beyond this glutamylation threshold. Glutamylation is also involved in cilia motility. Phosphorylated on Ser-172 by CDK1 during the cell cycle, from metaphase to telophase, but not in interphase. This phosphorylation inhibits tubulin incorporation into microtubules.

Its subcellular location is the cytoplasm. The protein resides in the cytoskeleton. Tubulin is the major constituent of microtubules, a cylinder consisting of laterally associated linear protofilaments composed of alpha- and beta-tubulin heterodimers. Microtubules grow by the addition of GTP-tubulin dimers to the microtubule end, where a stabilizing cap forms. Below the cap, tubulin dimers are in GDP-bound state, owing to GTPase activity of alpha-tubulin. This chain is Tubulin beta chain (TUBB), found in Sus scrofa (Pig).